A 444-amino-acid chain; its full sequence is Enolase 1 (444 aa).

Residues His165 and Glu174 each contribute to the substrate site. Residue Glu217 is the Proton donor of the active site. 2 residues coordinate substrate: Glu303 and Asp330. The active-site Proton acceptor is Lys355. Residues 382 to 385 and Lys406 contribute to the substrate site; that span reads SHRS.

Belongs to the enolase family. Homodimer. It depends on Mg(2+) as a cofactor.

It localises to the cytoplasm. It carries out the reaction (2R)-2-phosphoglycerate = phosphoenolpyruvate + H2O. It functions in the pathway carbohydrate degradation; glycolysis; pyruvate from D-glyceraldehyde 3-phosphate: step 4/5. This is Enolase 1 (ENO1) from Toxoplasma gondii.